We begin with the raw amino-acid sequence, 149 residues long: Large ribosomal subunit protein uL11 (149 aa).

It belongs to the universal ribosomal protein uL11 family. In terms of assembly, part of the ribosomal stalk of the 50S ribosomal subunit. Interacts with L10 and the large rRNA to form the base of the stalk. L10 forms an elongated spine to which L12 dimers bind in a sequential fashion forming a multimeric L10(L12)X complex. In terms of processing, one or more lysine residues are methylated.

Functionally, forms part of the ribosomal stalk which helps the ribosome interact with GTP-bound translation factors. This Methylobacterium sp. (strain 4-46) protein is Large ribosomal subunit protein uL11.